Consider the following 123-residue polypeptide: MNLKTTLLLIIGGGLGALARYYISGILPVYKDFPLGTLLVNSIASFILGYLYGLLFFGFEVSSEWRIFLGTGFCGGLSTFSTFSYETFSLLREGEYLLAFMNVVANVLVTITLVFLGFILARR.

The next 4 helical transmembrane spans lie at 7 to 27 (LLLI…SGIL), 39 to 59 (LVNS…FFGF), 67 to 87 (IFLG…SYET), and 100 to 120 (FMNV…GFIL). Residues glycine 75 and serine 78 each contribute to the Na(+) site.

Belongs to the fluoride channel Fluc/FEX (TC 1.A.43) family.

Its subcellular location is the cell membrane. The enzyme catalyses fluoride(in) = fluoride(out). With respect to regulation, na(+) is not transported, but it plays an essential structural role and its presence is essential for fluoride channel function. Fluoride-specific ion channel. Important for reducing fluoride concentration in the cell, thus reducing its toxicity. This chain is Fluoride-specific ion channel FluC, found in Pyrococcus abyssi (strain GE5 / Orsay).